A 418-amino-acid polypeptide reads, in one-letter code: UDP-N-acetylglucosamine 1-carboxyvinyltransferase (418 aa).

22-23 (KN) contacts phosphoenolpyruvate. Arginine 93 serves as a coordination point for UDP-N-acetyl-alpha-D-glucosamine. The active-site Proton donor is the cysteine 117. The residue at position 117 (cysteine 117) is a 2-(S-cysteinyl)pyruvic acid O-phosphothioketal. Residues 122–126 (RPIDL), aspartate 306, and leucine 328 contribute to the UDP-N-acetyl-alpha-D-glucosamine site.

This sequence belongs to the EPSP synthase family. MurA subfamily.

The protein localises to the cytoplasm. It carries out the reaction phosphoenolpyruvate + UDP-N-acetyl-alpha-D-glucosamine = UDP-N-acetyl-3-O-(1-carboxyvinyl)-alpha-D-glucosamine + phosphate. It participates in cell wall biogenesis; peptidoglycan biosynthesis. Functionally, cell wall formation. Adds enolpyruvyl to UDP-N-acetylglucosamine. This chain is UDP-N-acetylglucosamine 1-carboxyvinyltransferase, found in Campylobacter hominis (strain ATCC BAA-381 / DSM 21671 / CCUG 45161 / LMG 19568 / NCTC 13146 / CH001A).